The sequence spans 425 residues: Serine hydroxymethyltransferase (425 aa).

Residues Leu-124 and 128–130 (GHL) contribute to the (6S)-5,6,7,8-tetrahydrofolate site. An N6-(pyridoxal phosphate)lysine modification is found at Lys-233.

The protein belongs to the SHMT family. As to quaternary structure, homodimer. Requires pyridoxal 5'-phosphate as cofactor.

The protein resides in the cytoplasm. The catalysed reaction is (6R)-5,10-methylene-5,6,7,8-tetrahydrofolate + glycine + H2O = (6S)-5,6,7,8-tetrahydrofolate + L-serine. The protein operates within one-carbon metabolism; tetrahydrofolate interconversion. It functions in the pathway amino-acid biosynthesis; glycine biosynthesis; glycine from L-serine: step 1/1. Catalyzes the reversible interconversion of serine and glycine with tetrahydrofolate (THF) serving as the one-carbon carrier. This reaction serves as the major source of one-carbon groups required for the biosynthesis of purines, thymidylate, methionine, and other important biomolecules. Also exhibits THF-independent aldolase activity toward beta-hydroxyamino acids, producing glycine and aldehydes, via a retro-aldol mechanism. This is Serine hydroxymethyltransferase from Clavibacter michiganensis subsp. michiganensis (strain NCPPB 382).